The sequence spans 429 residues: Lysine-specific demethylase JMJ30 (429 aa).

Positions 272 to 429 constitute a JmjC domain; sequence SSPMEPTYLA…WSNEAESSSS (158 aa). Fe cation contacts are provided by His326, Asp328, and His405.

This sequence belongs to the JARID1 histone demethylase family. As to quaternary structure, interacts with EFM. Binds to ATXR2, ARF7 and ARF19. Requires Fe(2+) as cofactor. As to expression, expressed ubiquitously in vasculatures, roots, rosette leaves, stems, inflorescences and siliques. Mainly present in the root meristem and root differentiation area. Observed at high level in callus.

It localises to the nucleus. Its subcellular location is the cytoplasm. The protein localises to the endoplasmic reticulum. The enzyme catalyses N(6),N(6),N(6)-trimethyl-L-lysyl(36)-[histone H3] + 2 2-oxoglutarate + 2 O2 = N(6)-methyl-L-lysyl(36)-[histone H3] + 2 formaldehyde + 2 succinate + 2 CO2. The catalysed reaction is N(6),N(6),N(6)-trimethyl-L-lysyl(27)-[histone H3] + 2 2-oxoglutarate + 2 O2 = N(6)-methyl-L-lysyl(27)-[histone H3] + 2 formaldehyde + 2 succinate + 2 CO2. It catalyses the reaction N(6),N(6)-dimethyl-L-lysyl(36)-[histone H3] + 2 2-oxoglutarate + 2 O2 = L-lysyl(36)-[histone H3] + 2 formaldehyde + 2 succinate + 2 CO2. Its function is as follows. Histone demethylase that demethylates 'Lys-36' (H3K36me) of histone H3 with a specific activity for H3K36me3 and H3K36me2. Also active on 'Lys-27' (H3K27me) of histone H3 with a specific activity for H3K27me3 and H3K27me2. No activity on H3K36me1 and H3K27me1. Involved in the control of flowering time by demethylating H3K36me2 at the FT locus and repressing its expression. Acts within the central clock and contributes, in parallel with LUX, to temperature compensation, probably as a component of the evening complex, to maintain circadian period at increasing temperatures; this mechanism involves binding to and regulation of CCA1 and PRR7 promoters. Works in concert with TOC1 to promote the morning-phased clock genes CCA1 and LHY which function as components of the central oscillator. Together with JMJ32, regulates the flowering-repressor FLOWERING LOCUS C (FLC) locus by removing the repressive histone modification H3 lysine 27 trimethylation (H3K27me3), especially at elevated temperatures (e.g. 29 degrees Celsius), thus preventing extreme precocious flowering. JMJ30 and JMJ32 are regulators involved in the integration of abscisic acid (ABA) and brassinosteroids (BR) signaling pathways. Together with JMJ32, controls ABA-mediated growth arrest during the post-germination stage in unfavorable conditions, and responses to ABA during root development, via the removal of repressive histone mark (H3K27me3) from the SnRK2.8 promoter, thus promoting SnRK2.8 expression and subsequent kinase-dependent ABI3 activation. In addition, removes the repressive histone marks (H3K27me3) from the BZR1 locus in response to stress and ABA, thus activating the BR signaling pathway which, in turn, inhibits the ABA signaling pathway. Able to drive tissue identity changes to promote callus formation form somatic cells via a massive genome-wide chromatin remodeling (e.g. H3K9me3 demethylation) leading to the induction of Lateral organ Boundaries-Domain (LBD) genes (e.g. LBD16 and LBD29) that establish root primordia; when in complex with ARF proteins (e.g. ARF7 and ARF19), recruits ATXR2 which promotes the deposition of H3K36me3 at LBD genes promoters, thus ensuring their stable activation during callus formation. This chain is Lysine-specific demethylase JMJ30, found in Arabidopsis thaliana (Mouse-ear cress).